The primary structure comprises 612 residues: Large ribosomal subunit assembly factor BipA (612 aa).

Residues 5-200 form the tr-type G domain; sequence NDLRNIAIIA…TIIKHVPAPV (196 aa). GTP-binding positions include 17-22 and 130-133; these read DHGKTT and NKID.

It belongs to the TRAFAC class translation factor GTPase superfamily. Classic translation factor GTPase family. BipA subfamily. Monomer.

It localises to the cytoplasm. It carries out the reaction GTP + H2O = GDP + phosphate + H(+). Functionally, a 50S ribosomal subunit assembly protein with GTPase activity, required for 50S subunit assembly at low temperatures, may also play a role in translation. Binds GTP and analogs. Binds the 70S ribosome between the 30S and 50S subunits, in a similar position as ribosome-bound EF-G; it contacts a number of ribosomal proteins, both rRNAs and the A-site tRNA. The polypeptide is Large ribosomal subunit assembly factor BipA (Bacillus subtilis (strain 168)).